The following is a 223-amino-acid chain: Ribonuclease 3 (223 aa).

In terms of domain architecture, RNase III spans 3–125; the sequence is LERLQKKLSY…IIAAIYLDAG (123 aa). E38 provides a ligand contact to Mg(2+). D42 is a catalytic residue. Mg(2+) contacts are provided by D111 and E114. E114 is an active-site residue. In terms of domain architecture, DRBM spans 152 to 222; it reads DPKTRLQEFL…AEQVLAKLTT (71 aa).

This sequence belongs to the ribonuclease III family. Homodimer. Mg(2+) serves as cofactor.

The protein localises to the cytoplasm. It carries out the reaction Endonucleolytic cleavage to 5'-phosphomonoester.. Digests double-stranded RNA. Involved in the processing of primary rRNA transcript to yield the immediate precursors to the large and small rRNAs (23S and 16S). Processes some mRNAs, and tRNAs when they are encoded in the rRNA operon. Processes pre-crRNA and tracrRNA of type II CRISPR loci if present in the organism. The sequence is that of Ribonuclease 3 from Actinobacillus pleuropneumoniae serotype 5b (strain L20).